The primary structure comprises 153 residues: Actin-related protein 2/3 complex subunit 5-like protein (153 aa).

The residue at position 64 (serine 64) is a Phosphoserine.

The protein belongs to the ARPC5 family. May be a component of the Arp2/3 complex in which it may replace ARPC5.

The protein resides in the cytoplasm. It localises to the cytoskeleton. The protein localises to the cell projection. Functionally, may function as component of the Arp2/3 complex which is involved in regulation of actin polymerization and together with an activating nucleation-promoting factor (NPF) mediates the formation of branched actin networks. The sequence is that of Actin-related protein 2/3 complex subunit 5-like protein (ARPC5L) from Bos taurus (Bovine).